We begin with the raw amino-acid sequence, 148 residues long: Putative nickel-responsive regulator (148 aa).

Residues histidine 88, histidine 99, histidine 101, and cysteine 107 each contribute to the Ni(2+) site.

The protein belongs to the transcriptional regulatory CopG/NikR family. Homotetramer. The cofactor is Ni(2+).

In terms of biological role, transcriptional regulator. This is Putative nickel-responsive regulator from Helicobacter pylori (strain J99 / ATCC 700824) (Campylobacter pylori J99).